Reading from the N-terminus, the 511-residue chain is Probable pectinesterase/pectinesterase inhibitor 17 (511 aa).

The N-terminal stretch at 1–23 (MMAFRAYIINFVILCILVASTVS) is a signal peptide. A pectinesterase inhibitor 17 region spans residues 24–171 (GYNQKDVKAW…SNLLCNTLAI (148 aa)). N-linked (GlcNAc...) asparagine glycosylation is found at Asn112 and Asn160. Residues 237-414 (VKQGVYSENL…LRPVLGSTKT (178 aa)) are pectinesterase 17. Substrate-binding residues include Thr277 and Gln307. Residue Asp330 is the Proton donor; for pectinesterase activity of the active site. Cysteines 344 and 364 form a disulfide. The active-site Nucleophile; for pectinesterase activity is Asp351. 2 residues coordinate substrate: Arg418 and Trp420.

This sequence in the N-terminal section; belongs to the PMEI family. In the C-terminal section; belongs to the pectinesterase family. In terms of tissue distribution, expressed in siliques.

The protein resides in the secreted. It localises to the cell wall. It carries out the reaction [(1-&gt;4)-alpha-D-galacturonosyl methyl ester](n) + n H2O = [(1-&gt;4)-alpha-D-galacturonosyl](n) + n methanol + n H(+). The protein operates within glycan metabolism; pectin degradation; 2-dehydro-3-deoxy-D-gluconate from pectin: step 1/5. Acts in the modification of cell walls via demethylesterification of cell wall pectin. The chain is Probable pectinesterase/pectinesterase inhibitor 17 (PME17) from Arabidopsis thaliana (Mouse-ear cress).